The following is a 185-amino-acid chain: Elongation factor P (185 aa).

The protein belongs to the elongation factor P family.

The protein localises to the cytoplasm. Its pathway is protein biosynthesis; polypeptide chain elongation. Functionally, involved in peptide bond synthesis. Stimulates efficient translation and peptide-bond synthesis on native or reconstituted 70S ribosomes in vitro. Probably functions indirectly by altering the affinity of the ribosome for aminoacyl-tRNA, thus increasing their reactivity as acceptors for peptidyl transferase. This is Elongation factor P from Burkholderia vietnamiensis (strain G4 / LMG 22486) (Burkholderia cepacia (strain R1808)).